We begin with the raw amino-acid sequence, 510 residues long: Cobyric acid synthase (510 aa).

One can recognise a GATase cobBQ-type domain in the interval 249–458; sequence CFKVRVLVYP…LHGLFDSPDA (210 aa). Catalysis depends on cysteine 336, which acts as the Nucleophile. Histidine 450 is an active-site residue.

The protein belongs to the CobB/CobQ family. CobQ subfamily.

It functions in the pathway cofactor biosynthesis; adenosylcobalamin biosynthesis. Functionally, catalyzes amidations at positions B, D, E, and G on adenosylcobyrinic A,C-diamide. NH(2) groups are provided by glutamine, and one molecule of ATP is hydrogenolyzed for each amidation. In Shewanella oneidensis (strain ATCC 700550 / JCM 31522 / CIP 106686 / LMG 19005 / NCIMB 14063 / MR-1), this protein is Cobyric acid synthase.